We begin with the raw amino-acid sequence, 88 residues long: U-scoloptoxin(01)-Tl1a (88 aa).

Residues 1–16 (MSVYGLLSLLIFIVLA) form the signal peptide. Residues 25–81 (GKDCSEKEEYLYDSSNCDIFYECDESLKPQRMMCGPGTGWNQDKLVCDFLTNIDCTR) form the Chitin-binding type-2 domain. A disulfide bridge links cysteine 58 with cysteine 71.

This sequence belongs to the scoloptoxin-01 family. Post-translationally, contains 3 disulfide bonds. In terms of tissue distribution, expressed by the venom gland.

The protein resides in the secreted. In Thereuopoda longicornis (Long-legged centipede), this protein is U-scoloptoxin(01)-Tl1a.